Here is a 398-residue protein sequence, read N- to C-terminus: Cell adhesion molecule 3 (398 aa).

The signal sequence occupies residues 1-24 (MGAPAASLLLLLLLFACCWAPGGA). The region spanning 25-126 (NLSQDDSQPW…VRTAKSLVTV (102 aa)) is the Ig-like V-type domain. Over 25–330 (NLSQDDSQPW…PVPSSSSTYH (306 aa)) the chain is Extracellular. 3 disulfides stabilise this stretch: C50/C110, C152/C209, and C254/C299. 2 Ig-like C2-type domains span residues 130-228 (PQKP…QRIE) and 233-315 (PTAM…YTLN). N-linked (GlcNAc...) asparagine glycosylation occurs at N290. Residues 331 to 351 (AIIGGIVAFIVFLLLIMLIFL) form a helical membrane-spanning segment. At 352-398 (GHYLIRHKGTYLTHEAKGSDDAPDADTAIINAEGGQSGGDDKKEYFI) the chain is on the cytoplasmic side. Residues 367 to 398 (AKGSDDAPDADTAIINAEGGQSGGDDKKEYFI) are disordered. S388 carries the phosphoserine modification.

It belongs to the nectin family. Homodimer. Can form trans-heterodimers with NECTIN3. Interacts with EPB41L1, DLG3, PALS2 and CASK. In terms of tissue distribution, isoform 1 is expressed mainly in adult and fetal brain. Isoform 2 is highly expressed in adult brain and weakly expressed in placenta. In brain, Isoform 2 is highly expressed in cerebellum.

It is found in the cell membrane. The protein resides in the cell junction. Functionally, involved in cell-cell adhesion. Has both calcium-independent homophilic cell-cell adhesion activity and calcium-independent heterophilic cell-cell adhesion activity with IGSF4, NECTIN1 and NECTIN3. Interaction with EPB41L1 may regulate structure or function of cell-cell junctions. The chain is Cell adhesion molecule 3 (CADM3) from Homo sapiens (Human).